The following is a 397-amino-acid chain: Citrate synthase (397 aa).

Active-site residues include histidine 266 and aspartate 320.

It belongs to the citrate synthase family.

The enzyme catalyses oxaloacetate + acetyl-CoA + H2O = citrate + CoA + H(+). It participates in carbohydrate metabolism; tricarboxylic acid cycle; isocitrate from oxaloacetate: step 1/2. The sequence is that of Citrate synthase (gltA) from Synechocystis sp. (strain ATCC 27184 / PCC 6803 / Kazusa).